Here is a 439-residue protein sequence, read N- to C-terminus: Synaptotagmin-B (439 aa).

Over 1–74 (MQAEMNQSAE…KEKFMNELQK (74 aa)) the chain is Vesicular. Residues asparagine 6 and asparagine 46 are each glycosylated (N-linked (GlcNAc...) asparagine). A helical transmembrane segment spans residues 75 to 101 (IPLPPWALIAIAIVSGLLLLTCCLCIC). The Cytoplasmic portion of the chain corresponds to 102–439 (KKCCCKKKKN…EVDVALGLKK (338 aa)). Residues 113-155 (KEKGKGKKNDINMKDVKGSGGNQDDDDAETGLTEGEDKEEEAK) form a disordered region. Residues 119–129 (KKNDINMKDVK) show a composition bias toward basic and acidic residues. Residues 135–151 (QDDDDAETGLTEGEDKE) are compositionally biased toward acidic residues. The interval 153 to 399 (EAKEEEKLGK…AIGKIFVGSN (247 aa)) is phospholipid binding. C2 domains follow at residues 159-278 (KLGK…EEWR) and 290-423 (KLGD…AQWH). 14 residues coordinate Ca(2+): leucine 189, aspartate 190, aspartate 196, aspartate 248, phenylalanine 249, aspartate 250, serine 253, lysine 254, aspartate 256, aspartate 321, aspartate 327, aspartate 381, aspartate 383, and aspartate 389.

This sequence belongs to the synaptotagmin family. As to quaternary structure, homodimer or homotrimer (possible). Ca(2+) serves as cofactor. Spinal cord, brainstem, midbrain and electric organ.

It is found in the cytoplasmic vesicle. Its subcellular location is the secretory vesicle. It localises to the synaptic vesicle membrane. The protein resides in the synapse. In terms of biological role, may have a regulatory role in the membrane interactions during trafficking of synaptic vesicles at the active zone of the synapse. It binds acidic phospholipids with a specificity that requires the presence of both an acidic head group and a diacyl backbone. The sequence is that of Synaptotagmin-B (P65-B) from Diplobatis ommata (Ocellated electric ray).